Here is a 499-residue protein sequence, read N- to C-terminus: BTB/POZ domain-containing protein 16 (499 aa).

The BTB domain maps to 143-199 (INDPLVTREAFATALKNLYMQEVKICLDDVLGVLAAAHILQFGSLFQRCVTVMMSGL).

In Bos taurus (Bovine), this protein is BTB/POZ domain-containing protein 16 (BTBD16).